We begin with the raw amino-acid sequence, 98 residues long: NADH-ubiquinone oxidoreductase chain 4L (98 aa).

3 consecutive transmembrane segments (helical) span residues 1–21 (MTMVYANIFLAFITSLMGLLM), 29–49 (SLLCLEGMMLSLFVMMTITIL), and 61–81 (IILLVFAACEAALGLSLLVMV).

This sequence belongs to the complex I subunit 4L family. Core subunit of respiratory chain NADH dehydrogenase (Complex I) which is composed of 45 different subunits.

Its subcellular location is the mitochondrion inner membrane. It catalyses the reaction a ubiquinone + NADH + 5 H(+)(in) = a ubiquinol + NAD(+) + 4 H(+)(out). Core subunit of the mitochondrial membrane respiratory chain NADH dehydrogenase (Complex I) which catalyzes electron transfer from NADH through the respiratory chain, using ubiquinone as an electron acceptor. Part of the enzyme membrane arm which is embedded in the lipid bilayer and involved in proton translocation. The protein is NADH-ubiquinone oxidoreductase chain 4L (MT-ND4L) of Ommatophoca rossii (Ross seal).